A 260-amino-acid polypeptide reads, in one-letter code: Small ribosomal subunit protein uS2 (260 aa).

This sequence belongs to the universal ribosomal protein uS2 family.

This chain is Small ribosomal subunit protein uS2 (rpsB), found in Borreliella burgdorferi (strain ATCC 35210 / DSM 4680 / CIP 102532 / B31) (Borrelia burgdorferi).